Reading from the N-terminus, the 125-residue chain is Small ribosomal subunit protein eS8 (125 aa).

The disordered stretch occupies residues 1–20 (MIWQGRSRRKPSGGFYRKAR).

Belongs to the eukaryotic ribosomal protein eS8 family. As to quaternary structure, part of the 30S ribosomal subunit.

The polypeptide is Small ribosomal subunit protein eS8 (rps8e) (Archaeoglobus fulgidus (strain ATCC 49558 / DSM 4304 / JCM 9628 / NBRC 100126 / VC-16)).